A 779-amino-acid polypeptide reads, in one-letter code: Ribonucleoside-diphosphate reductase large subunit (779 aa).

Substrate is bound by residues serine 178, 193–194 (SC), glycine 222, 420–424 (NLCIE), and 614–618 (PTATS). Cysteine 194 and cysteine 440 are joined by a disulfide. Residue asparagine 420 is the Proton acceptor of the active site. Cysteine 422 acts as the Cysteine radical intermediate in catalysis. Glutamate 424 functions as the Proton acceptor in the catalytic mechanism.

Belongs to the ribonucleoside diphosphate reductase large chain family. Heterotetramer composed of a homodimer of the large subunit (R1) and a homodimer of the small subunit (R2). Larger multisubunit protein complex are also active, composed of (R1)n(R2)n.

It carries out the reaction a 2'-deoxyribonucleoside 5'-diphosphate + [thioredoxin]-disulfide + H2O = a ribonucleoside 5'-diphosphate + [thioredoxin]-dithiol. Under complex allosteric control mediated by deoxynucleoside triphosphates and ATP binding. The type of nucleotide bound at the specificity site determines substrate preference. It seems probable that ATP makes the enzyme reduce CDP and UDP, dGTP favors ADP reduction and dTTP favors GDP reduction. Functionally, ribonucleoside-diphosphate reductase holoenzyme provides the precursors necessary for viral DNA synthesis. Allows virus growth in non-dividing cells. Catalyzes the biosynthesis of deoxyribonucleotides from the corresponding ribonucleotides. The chain is Ribonucleoside-diphosphate reductase large subunit from African swine fever virus (isolate Tick/Malawi/Lil 20-1/1983) (ASFV).